Consider the following 106-residue polypeptide: Trp operon repressor homolog (106 aa).

The DNA-binding element occupies 59-82 (QREIQQILNTSAATITRGSNMIKI).

The protein belongs to the TrpR family. As to quaternary structure, homodimer.

It localises to the cytoplasm. This protein is an aporepressor. When complexed with L-tryptophan it binds the operator region of the trp operon and prevents the initiation of transcription. This Histophilus somni (strain 129Pt) (Haemophilus somnus) protein is Trp operon repressor homolog.